A 625-amino-acid polypeptide reads, in one-letter code: BTB/POZ domain-containing protein At5g48130 (625 aa).

The 65-residue stretch at 41–105 folds into the BTB domain; sequence ASVHVRVCNK…IYGCPTLIHP (65 aa). Positions 217-469 constitute an NPH3 domain; sequence DTWIKDLTDL…VQALFIQQLN (253 aa). Residues 494-507 show a composition bias toward polar residues; the sequence is VPSSRPLTSQQSPC. Residues 494–513 form a disordered region; sequence VPSSRPLTSQQSPCTDDETG.

This sequence belongs to the NPH3 family.

Its pathway is protein modification; protein ubiquitination. May act as a substrate-specific adapter of an E3 ubiquitin-protein ligase complex (CUL3-RBX1-BTB) which mediates the ubiquitination and subsequent proteasomal degradation of target proteins. This chain is BTB/POZ domain-containing protein At5g48130, found in Arabidopsis thaliana (Mouse-ear cress).